The sequence spans 253 residues: GTP cyclohydrolase III (253 aa).

The protein belongs to the archaeal-type GTP cyclohydrolase family.

The enzyme catalyses GTP + 3 H2O = 2-amino-5-formylamino-6-(5-phospho-D-ribosylamino)pyrimidin-4(3H)-one + 2 phosphate + 2 H(+). Functionally, catalyzes the formation of 2-amino-5-formylamino-6-ribofuranosylamino-4(3H)-pyrimidinone ribonucleotide monophosphate and inorganic phosphate from GTP. Also has an independent pyrophosphate phosphohydrolase activity. The polypeptide is GTP cyclohydrolase III (Natronomonas pharaonis (strain ATCC 35678 / DSM 2160 / CIP 103997 / JCM 8858 / NBRC 14720 / NCIMB 2260 / Gabara) (Halobacterium pharaonis)).